The following is a 388-amino-acid chain: MVLSVKQTLSPKIGLFRRNPSSSLGRSPVSLSFPSTELPKRTVLAVSKPLHLSSSLRAKSPVVRCEAYEADRSEPHPIGDDAAAAETKSEAAKKLKIGIYFATWWALNVVFNIYNKKVLNAYPYPWLTSTLSLAAGSLMMLISWAVGIVETPKTDFDFWKTLFPVAVAHTIGHVAATVSMSKVAVSFTHIIKSGEPAFSVLVSRFILGETFPTSVYLSLIPIIGGCALSALTELNFNMIGFMGAMISNLAFVFRNIFSKKGMKGKSVSGMNYYACLSMLSLLILTPFAIAVEGPQMWVDGWQTALATVGPQFVWWVVAQSVFYHLYNQVSYMSLDQISPLTFSVGNTMKRISVIVSSIIIFRTPVQPVNALGAAIAILGTFLYSQAKL.

Residues 1 to 65 constitute a chloroplast transit peptide; that stretch reads MVLSVKQTLS…LRAKSPVVRC (65 aa). The next 8 helical transmembrane spans lie at 95–115, 129–149, 158–178, 211–231, 233–253, 273–293, 305–325, and 363–383; these read LKIG…NIYN, STLS…VGIV, FWKT…AATV, FPTS…LSAL, ELNF…AFVF, YACL…AVEG, LATV…FYHL, and TPVQ…TFLY. Positions 112-229 constitute an EamA domain; sequence NIYNKKVLNA…IPIIGGCALS (118 aa).

This sequence belongs to the TPT transporter family. GPT (TC 2.A.7.9) subfamily. As to expression, expressed in seeds, flowers, rosette leaves, and roots, with highest levels found in stamens. Found in the root cap, in guard cells and in mesophyll cells.

The protein localises to the plastid. The protein resides in the chloroplast membrane. Its subcellular location is the endoplasmic reticulum membrane. It is found in the peroxisome membrane. Its function is as follows. Glucose 6-phosphate (Glc6P) transporter. Also transports inorganic phosphate, 3-phosphoglycerate, triose phosphates and, to a leser extent, phosphoenolpyruvate. Responsible for the transport of Glc6P into plastids of heterotrophic tissues where it can be used as a carbon source for starch biosynthesis, as substrate for fatty acid biosynthesis or as substrate for NADPH generation via the oxidative pentose phosphate pathway (OPPP). Required for pollen maturation and embryo sac development. Preferentially exchanges Glc6P for ribulose-5-phosphate (Ru5P) in reconstituted yeast proteoliposomes. May supply the substrate (Glc6P) for OPPP reactions inside peroxisomes and exchange it with the product Ru5P which leaves the organelle. In Arabidopsis thaliana (Mouse-ear cress), this protein is Glucose-6-phosphate/phosphate translocator 1, chloroplastic.